We begin with the raw amino-acid sequence, 195 residues long: Imidazoleglycerol-phosphate dehydratase (195 aa).

It belongs to the imidazoleglycerol-phosphate dehydratase family.

It is found in the cytoplasm. The catalysed reaction is D-erythro-1-(imidazol-4-yl)glycerol 3-phosphate = 3-(imidazol-4-yl)-2-oxopropyl phosphate + H2O. It functions in the pathway amino-acid biosynthesis; L-histidine biosynthesis; L-histidine from 5-phospho-alpha-D-ribose 1-diphosphate: step 6/9. In Cereibacter sphaeroides (strain ATCC 17023 / DSM 158 / JCM 6121 / CCUG 31486 / LMG 2827 / NBRC 12203 / NCIMB 8253 / ATH 2.4.1.) (Rhodobacter sphaeroides), this protein is Imidazoleglycerol-phosphate dehydratase.